Reading from the N-terminus, the 983-residue chain is Serine/threonine-protein kinase N2 (983 aa).

The 77-residue stretch at 33-109 (KLDFSDTMVQ…LQELNAHIVV (77 aa)) folds into the REM-1 1 domain. Lys-77 carries the N6-acetyllysine modification. Residues 107 to 135 (IVVSDPEDSTDCPRTPDTPNSDSRSSTSN) form a disordered region. Phosphoserine is present on Ser-110. Thr-121 and Thr-124 each carry phosphothreonine. Residues 121 to 135 (TPDTPNSDSRSSTSN) are compositionally biased toward low complexity. REM-1 domains follow at residues 121–203 (TPDT…TNEL) and 204–284 (AFDN…ELPR). A phosphoserine mark is found at Ser-301, Ser-305, Ser-359, and Ser-361. Residues 351–382 (TSVALPGWSPSDNRSSFMSRTSKSKSGSSRNL) are disordered. Positions 352-472 (SVALPGWSPS…LYLEPQGTLF (121 aa)) constitute a C2 domain. The segment covering 364–380 (RSSFMSRTSKSKSGSSR) has biased composition (low complexity). The segment at 381 to 462 (NLLKTDDLSN…FLDNQRHGMC (82 aa)) is necessary to rescue apical junction formation. Phosphoserine is present on residues Ser-534, Ser-582, Ser-619, and Ser-630. Positions 553–588 (LAPPASDSTVTKLDFDLEPEPPPAPPRASSLGETDE) are disordered. A Protein kinase domain is found at 656 to 915 (FRCCAVLGRG…AEDVKKHPFF (260 aa)). ATP contacts are provided by residues 662–670 (LGRGHFGKV) and Lys-685. Asp-781 serves as the catalytic Proton acceptor. Thr-815 bears the Phosphothreonine; by PDPK1 mark. The segment at 916 to 976 (RLTDWSALMD…EEEQEMFHDF (61 aa)) is necessary for the catalytic activity. The 68-residue stretch at 916–983 (RLTDWSALMD…HDFDYVADWC (68 aa)) folds into the AGC-kinase C-terminal domain. Ser-951 is subject to Phosphoserine. Phosphothreonine is present on Thr-957. Residues 977–983 (DYVADWC) are negatively regulates the responsiveness of the catalytic activity by cardiolipin and is required for optimal activation by the GTP-bound RhoA.

This sequence belongs to the protein kinase superfamily. AGC Ser/Thr protein kinase family. PKC subfamily. Interacts (via the REM repeats) with RHOA (GTP-bound form preferentially) and interacts (via the REM repeats) with RAC1 (GTP-bound form preferentially); the interactions induce its autophosphorylation. Interacts with NCK1 (via SH3 domains). Interacts with RHOC. Interacts with NCK1 and NCK2. Interacts with CD44. Interacts (via C-terminal kinase domain) with PDPK1; the interaction stimulates PDPK1 kinase activity. Interacts with MAP3K2; the interaction activates PRK2 kinase activity in a MAP3K2-independent kinase activity. Interacts (via C-terminal domain) with AKT1; the interaction occurs with the C-terminal cleavage product of PRK2 in apoptotic cells. Interacts (via C-terminus) with PTPN13 (via PDZ 3 domain). Interacts with CDK10. Post-translationally, phosphorylated during mitosis. Autophosphorylated. Phosphorylated. Phosphorylated by CDK10. Activated by limited proteolysis with trypsin. Proteolytically cleaved by caspase-3 during the induction of apoptotic cell death. As to expression, ubiquitous. Highly expressed in liver and lung Expressed in astrocytes (at protein level). Ubiquitous.

The protein resides in the cytoplasm. Its subcellular location is the nucleus. It localises to the membrane. The protein localises to the cell projection. It is found in the lamellipodium. The protein resides in the cytoskeleton. Its subcellular location is the cleavage furrow. It localises to the midbody. The protein localises to the cell junction. The enzyme catalyses L-seryl-[protein] + ATP = O-phospho-L-seryl-[protein] + ADP + H(+). It catalyses the reaction L-threonyl-[protein] + ATP = O-phospho-L-threonyl-[protein] + ADP + H(+). With respect to regulation, kinase activity is activated upon binding to GTP-bound Rho1/Rac1 GTPases. Activated by caspase-3 (CASP3) cleavage during apoptosis. Activated by lipids, particularly cardiolipin and to a lesser extent by other acidic phospholipids and unsaturated fatty acids. Two specific sites, Thr-815 (activation loop of the kinase domain) and Thr-957 (turn motif), need to be phosphorylated for its full activation. In terms of biological role, PKC-related serine/threonine-protein kinase and Rho/Rac effector protein that participates in specific signal transduction responses in the cell. Plays a role in the regulation of cell cycle progression, actin cytoskeleton assembly, cell migration, cell adhesion, tumor cell invasion and transcription activation signaling processes. Phosphorylates CTTN in hyaluronan-induced astrocytes and hence decreases CTTN ability to associate with filamentous actin. Phosphorylates HDAC5, therefore lead to impair HDAC5 import. Direct RhoA target required for the regulation of the maturation of primordial junctions into apical junction formation in bronchial epithelial cells. Required for G2/M phases of the cell cycle progression and abscission during cytokinesis in a ECT2-dependent manner. Stimulates FYN kinase activity that is required for establishment of skin cell-cell adhesion during keratinocytes differentiation. Regulates epithelial bladder cells speed and direction of movement during cell migration and tumor cell invasion. Inhibits Akt pro-survival-induced kinase activity. Mediates Rho protein-induced transcriptional activation via the c-fos serum response factor (SRF). Involved in the negative regulation of ciliogenesis. The sequence is that of Serine/threonine-protein kinase N2 (Pkn2) from Mus musculus (Mouse).